The following is a 129-amino-acid chain: Small ribosomal subunit protein uS11 (129 aa).

Belongs to the universal ribosomal protein uS11 family. In terms of assembly, part of the 30S ribosomal subunit. Interacts with proteins S7 and S18. Binds to IF-3.

In terms of biological role, located on the platform of the 30S subunit, it bridges several disparate RNA helices of the 16S rRNA. Forms part of the Shine-Dalgarno cleft in the 70S ribosome. The sequence is that of Small ribosomal subunit protein uS11 from Pseudomonas entomophila (strain L48).